Here is a 356-residue protein sequence, read N- to C-terminus: Inositol phosphoceramide mannosyltransferase 3 (356 aa).

Residues Ile4–Gly24 traverse the membrane as a helical segment. Asn52 and Asn146 each carry an N-linked (GlcNAc...) asparagine glycan. 2 helical membrane passes run Phe197–Ala217 and Trp269–Gly289. Phosphoserine is present on residues Ser307, Ser353, and Ser355.

It belongs to the glycosyltransferase 32 family.

It localises to the endoplasmic reticulum membrane. The protein resides in the golgi apparatus. It is found in the cis-Golgi network membrane. Its subcellular location is the trans-Golgi network membrane. With imt1 and imt2, is required for the synthesis of mannosylinositol phosphoceramide (MIPC). Catalyzes the addition of mannosyl to inositol phosphoceramide (IPC). MIPC is essential for cell morphology, cell-surface distribution of ergosterol, localization for plasma-membrane transporters, and lipid-raft-mediated endocytosis of plasma membrane proteins to the vacuole. This chain is Inositol phosphoceramide mannosyltransferase 3, found in Schizosaccharomyces pombe (strain 972 / ATCC 24843) (Fission yeast).